Consider the following 260-residue polypeptide: 3-oxoadipate CoA-transferase subunit B (260 aa).

Residue Glu51 is part of the active site.

This sequence belongs to the 3-oxoacid CoA-transferase subunit B family. Heterotetramer composed of 2 A and 2 B subunits.

The enzyme catalyses 3-oxoadipate + succinyl-CoA = 3-oxoadipyl-CoA + succinate. Its pathway is aromatic compound metabolism; beta-ketoadipate pathway; acetyl-CoA and succinyl-CoA from 3-oxoadipate: step 1/2. The protein is 3-oxoadipate CoA-transferase subunit B (catJ) of Pseudomonas knackmussii (strain DSM 6978 / CCUG 54928 / LMG 23759 / B13).